The chain runs to 286 residues: Polyamine aminopropyltransferase (286 aa).

Positions 5–238 (KTWHEKLYCH…GVMVFAWGTN (234 aa)) constitute a PABS domain. Residues histidine 64 and aspartate 88 each contribute to the spermidine site. S-methyl-5'-thioadenosine is bound by residues glutamate 108 and 140 to 141 (DG). The Proton acceptor role is filled by aspartate 158. A spermidine-binding site is contributed by 158 to 161 (DSTD).

It belongs to the spermidine/spermine synthase family. Homodimer or homotetramer.

Its subcellular location is the cytoplasm. The enzyme catalyses S-adenosyl 3-(methylsulfanyl)propylamine + putrescine = S-methyl-5'-thioadenosine + spermidine + H(+). Its pathway is amine and polyamine biosynthesis; spermidine biosynthesis; spermidine from putrescine: step 1/1. Functionally, catalyzes the irreversible transfer of a propylamine group from the amino donor S-adenosylmethioninamine (decarboxy-AdoMet) to putrescine (1,4-diaminobutane) to yield spermidine. The sequence is that of Polyamine aminopropyltransferase from Buchnera aphidicola subsp. Acyrthosiphon pisum (strain 5A).